The primary structure comprises 468 residues: UDP-N-acetylmuramate--L-alanine ligase (468 aa).

Residue 114-120 (GTHGKTT) coordinates ATP.

This sequence belongs to the MurCDEF family.

It localises to the cytoplasm. It catalyses the reaction UDP-N-acetyl-alpha-D-muramate + L-alanine + ATP = UDP-N-acetyl-alpha-D-muramoyl-L-alanine + ADP + phosphate + H(+). The protein operates within cell wall biogenesis; peptidoglycan biosynthesis. Functionally, cell wall formation. The chain is UDP-N-acetylmuramate--L-alanine ligase from Brucella anthropi (strain ATCC 49188 / DSM 6882 / CCUG 24695 / JCM 21032 / LMG 3331 / NBRC 15819 / NCTC 12168 / Alc 37) (Ochrobactrum anthropi).